The following is a 371-amino-acid chain: Forkhead box protein E1 (371 aa).

A disordered region spans residues E21 to R53. A compositionally biased stretch (low complexity) spans A26–G39. A compositionally biased stretch (basic residues) spans G43–Q52. The fork-head DNA-binding region spans K55–K149.

In terms of processing, phosphorylated. Expressed in Rathke pouch, in thyroid, and in the epithelium of the pharyngeal wall and arches, whereas it is absent in the epithelium of the pharyngeal pouches.

Its subcellular location is the nucleus. Its function is as follows. Transcription factor that binds consensus sites on a variety of gene promoters and activate their transcription. Involved in proper palate formation, most probably through the expression of MSX1 and TGFB3 genes which are direct targets of this transcription factor. Also implicated in thyroid gland morphogenesis. May indirectly play a role in cell growth and migration through the regulation of WNT5A expression. The sequence is that of Forkhead box protein E1 (Foxe1) from Mus musculus (Mouse).